We begin with the raw amino-acid sequence, 151 residues long: FUN14 domain-containing protein 1A (151 aa).

The YXXL motif lies at 14–17; that stretch reads YEVL. 3 helical membrane-spanning segments follow: residues 44–64, 71–91, and 130–150; these read YSVA…GFLF, AATA…GGYI, and FVKK…LGLA.

Belongs to the FUN14 family.

It is found in the mitochondrion outer membrane. In terms of biological role, acts as an activator of hypoxia-induced mitophagy, an important mechanism for mitochondrial quality control. This Xenopus laevis (African clawed frog) protein is FUN14 domain-containing protein 1A (fundc1-a).